A 530-amino-acid chain; its full sequence is Pyridoxine/pyridoxamine 5'-phosphate oxidase 1, chloroplastic (530 aa).

The transit peptide at 1-64 directs the protein to the chloroplast; it reads MRNVIRRVTT…TLCTKVIIPN (64 aa). M65 bears the N-acetylmethionine mark. A YjeF N-terminal domain is found at 81-297; the sequence is AAEIDETLMG…SVAEKYKLEL (217 aa). 131 to 135 is a (6S)-NADPHX binding site; it reads NNGGD. N132 and D196 together coordinate K(+). (6S)-NADPHX contacts are provided by residues 200–206 and D238; that span reads GFSFHGA. Residue S241 coordinates K(+). 247–250 lines the pyridoxal 5'-phosphate pocket; the sequence is EGDH. 321-324 provides a ligand contact to substrate; the sequence is RVNY. 325–327 serves as a coordination point for pyridoxal 5'-phosphate; it reads VSP. 374 to 377 provides a ligand contact to FMN; it reads RMVL. Pyridoxal 5'-phosphate is bound at residue K379. Residues 389-390, 395-396, and Q418 contribute to the FMN site; these read FT and KK. Y436, R440, and S444 together coordinate pyridoxal 5'-phosphate. FMN is bound by residues 453 to 454 and W499; that span reads QS. 505-507 contacts pyridoxal 5'-phosphate; the sequence is RLH. Residue R509 coordinates FMN.

In the N-terminal section; belongs to the NnrE/AIBP family. It in the C-terminal section; belongs to the pyridoxamine 5'-phosphate oxidase family. As to quaternary structure, homodimer. It depends on FMN as a cofactor. K(+) serves as cofactor. Expressed in leaves, stems, flowers and roots.

It localises to the plastid. Its subcellular location is the chloroplast. The catalysed reaction is pyridoxamine 5'-phosphate + O2 + H2O = pyridoxal 5'-phosphate + H2O2 + NH4(+). It catalyses the reaction pyridoxine 5'-phosphate + O2 = pyridoxal 5'-phosphate + H2O2. The enzyme catalyses (6R)-NADHX = (6S)-NADHX. It carries out the reaction (6R)-NADPHX = (6S)-NADPHX. The protein operates within cofactor metabolism; pyridoxal 5'-phosphate salvage; pyridoxal 5'-phosphate from pyridoxamine 5'-phosphate: step 1/1. It participates in cofactor metabolism; pyridoxal 5'-phosphate salvage; pyridoxal 5'-phosphate from pyridoxine 5'-phosphate: step 1/1. Catalyzes the oxidation of either pyridoxine 5'-phosphate (PNP) or pyridoxamine 5'-phosphate (PMP) into pyridoxal 5'-phosphate (PLP). Involved in the PLP salvage pathway. Has a higher preference for PNP over PMP. May also catalyze the epimerization of the S- and R-forms of NAD(P)HX, a damaged form of NAD(P)H that is a result of enzymatic or heat-dependent hydration. This is a prerequisite for the S-specific NAD(P)H-hydrate dehydratase to allow the repair of both epimers of NAD(P)HX. This chain is Pyridoxine/pyridoxamine 5'-phosphate oxidase 1, chloroplastic (PPOX1), found in Arabidopsis thaliana (Mouse-ear cress).